Reading from the N-terminus, the 419-residue chain is Transcription termination factor Rho (419 aa).

One can recognise a Rho RNA-BD domain in the interval 48–123 (DIFGDGVLEI…LKVNKVNYDK (76 aa)). 3 RNA-binding regions span residues 61–66 (GFGFLR), 78–80 (DIY), and 108–110 (ERY). ATP is bound by residues 169–174 (GRGQRG), 181–186 (KAGKTM), and Arg212. Residues 284 to 288 (VLTGG) form an RNA-binding 2 region.

This sequence belongs to the Rho family. Homohexamer. The homohexamer assembles into an open ring structure.

Facilitates transcription termination by a mechanism that involves Rho binding to the nascent RNA, activation of Rho's RNA-dependent ATPase activity, and release of the mRNA from the DNA template. In Buchnera aphidicola subsp. Baizongia pistaciae (strain Bp), this protein is Transcription termination factor Rho.